The following is a 381-amino-acid chain: Teichoic acid glycerol-phosphate primase (381 aa).

It belongs to the CDP-glycerol glycerophosphotransferase family.

The protein resides in the cell membrane. It catalyses the reaction N-acetyl-beta-D-mannosaminyl-(1-&gt;4)-N-acetyl-alpha-D-glucosaminyl di-trans,octa-cis-undecaprenyl diphosphate + CDP-glycerol = 4-O-[(2R)-glycerylphospho]-N-acetyl-beta-D-mannosaminyl-(1-&gt;4)-N-acetyl-alpha-D-glucosaminyl di-trans,octa-cis-undecaprenyl diphosphate + CMP + H(+). The protein operates within cell wall biogenesis; poly(glycerol phosphate) teichoic acid biosynthesis. In terms of biological role, catalyzes the addition of a single glycerol phosphate residue to the prenoldiphosphate-linked disaccharide, as a primer for polymerisation by TagF. In Bacillus subtilis (strain 168), this protein is Teichoic acid glycerol-phosphate primase (tagB).